A 1411-amino-acid polypeptide reads, in one-letter code: DNA-directed RNA polymerase subunit beta' (1411 aa).

C70, C72, C85, and C88 together coordinate Zn(2+). 3 residues coordinate Mg(2+): D460, D462, and D464. The Zn(2+) site is built by C814, C889, C896, and C899. The segment covering 1387–1399 has biased composition (polar residues); the sequence is RSTSSGTEITSPS. The interval 1387 to 1411 is disordered; that stretch reads RSTSSGTEITSPSKDAIPLGSKVGF.

Belongs to the RNA polymerase beta' chain family. As to quaternary structure, the RNAP catalytic core consists of 2 alpha, 1 beta, 1 beta' and 1 omega subunit. When a sigma factor is associated with the core the holoenzyme is formed, which can initiate transcription. Requires Mg(2+) as cofactor. It depends on Zn(2+) as a cofactor.

It catalyses the reaction RNA(n) + a ribonucleoside 5'-triphosphate = RNA(n+1) + diphosphate. Its function is as follows. DNA-dependent RNA polymerase catalyzes the transcription of DNA into RNA using the four ribonucleoside triphosphates as substrates. The sequence is that of DNA-directed RNA polymerase subunit beta' from Xylella fastidiosa (strain M12).